Here is a 402-residue protein sequence, read N- to C-terminus: Multidrug resistance protein MdtH (402 aa).

The Cytoplasmic segment spans residues 1-12; the sequence is MSRVSQARNLGK. The chain crosses the membrane as a helical span at residues 13–33; the sequence is YFLLIDNMLVVLGFFVVFPLI. At 34–98 the chain is on the periplasmic side; it reads SIRFVDQMGW…GFATMGIAHE (65 aa). The chain crosses the membrane as a helical span at residues 99-116; it reads PWLLWFSCLLSGLGGTLF. The Cytoplasmic segment spans residues 117 to 138; sequence DPPRSALVVKLIRPQQRGRFFS. The chain crosses the membrane as a helical span at residues 139–159; it reads LLMMQDSAGAVIGALLGSWLL. Topologically, residues 160–164 are periplasmic; it reads QYDFR. A helical membrane pass occupies residues 165–185; that stretch reads LVCATGAVLFVLCAAFNAWLL. At 186 to 213 the chain is on the cytoplasmic side; it reads PAWKLSTVRTPVREGMTRVMRDKRFVTY. A helical transmembrane segment spans residues 214–234; the sequence is VLTLAGYYMLAVQVMLMLPIM. The Periplasmic portion of the chain corresponds to 235–243; it reads VNDVAGAPS. The helical transmembrane segment at 244-264 threads the bilayer; sequence AVKWMYAIEACLSLTLLYPIA. Topologically, residues 265 to 276 are cytoplasmic; the sequence is RWSEKHFRLEHR. Residues 277 to 297 traverse the membrane as a helical segment; the sequence is LMAGLLIMSLSMMPVGMVSGL. Topologically, residues 298–299 are periplasmic; that stretch reads QQ. A helical transmembrane segment spans residues 300–320; the sequence is LFNLICLFYIGSIIAEPARET. The Cytoplasmic portion of the chain corresponds to 321–339; that stretch reads LSASLADARARGSYMGFSR. Residues 340-360 form a helical membrane-spanning segment; the sequence is LGLAIGGAIGYIGGGWLFDLG. At 361-367 the chain is on the periplasmic side; that stretch reads KSAHQPE. A helical transmembrane segment spans residues 368–388; the sequence is LPWMMLGIIGIFTFLALGWQF. Residues 389–402 lie on the Cytoplasmic side of the membrane; that stretch reads SQKRAARRLLERDA.

This sequence belongs to the major facilitator superfamily. DHA1 family. MdtH (TC 2.A.1.2.21) subfamily.

Its subcellular location is the cell inner membrane. In terms of biological role, confers resistance to norfloxacin and enoxacin. This Escherichia coli O9:H4 (strain HS) protein is Multidrug resistance protein MdtH.